The following is a 316-amino-acid chain: Retinol dehydrogenase 7 (316 aa).

33–57 lines the NADP(+) pocket; the sequence is FITGCDSGFGNLLARQLDRRGMRVL. Serine 163 is a binding site for substrate. Tyrosine 175 functions as the Proton acceptor in the catalytic mechanism.

Belongs to the short-chain dehydrogenases/reductases (SDR) family. As to expression, highly expressed in liver. Also expressed in lung, eye, kidney, and brain.

Its subcellular location is the microsome. It localises to the endoplasmic reticulum. It carries out the reaction all-trans-retinol--[retinol-binding protein] + NAD(+) = all-trans-retinal--[retinol-binding protein] + NADH + H(+). It functions in the pathway cofactor metabolism; retinol metabolism. In terms of biological role, acts on androgens and retinols, i.e. has steroid 3-alpha- and 17-beta-dehydrogenase and cis/trans-retinol catalytic activities. This is Retinol dehydrogenase 7 (Rdh7) from Mus musculus (Mouse).